An 896-amino-acid polypeptide reads, in one-letter code: DNA mismatch repair protein MutS (896 aa).

Position 638-645 (638-645 (GPNMSGKS)) interacts with ATP.

The protein belongs to the DNA mismatch repair MutS family.

Functionally, this protein is involved in the repair of mismatches in DNA. It is possible that it carries out the mismatch recognition step. This protein has a weak ATPase activity. The sequence is that of DNA mismatch repair protein MutS from Fusobacterium nucleatum subsp. nucleatum (strain ATCC 25586 / DSM 15643 / BCRC 10681 / CIP 101130 / JCM 8532 / KCTC 2640 / LMG 13131 / VPI 4355).